A 361-amino-acid polypeptide reads, in one-letter code: 5-formaminoimidazole-4-carboxamide-1-(beta)-D-ribofuranosyl 5'-monophosphate synthetase (361 aa).

5-amino-1-(5-phospho-beta-D-ribosyl)imidazole-4-carboxamide contacts are provided by H27 and S94. The region spanning 116-348 (RQILRWEAER…MGQRIAKEIK (233 aa)) is the ATP-grasp domain. Residues 146–208 (PDEI…TNYC) and E230 contribute to the ATP site. N258 lines the 5-amino-1-(5-phospho-beta-D-ribosyl)imidazole-4-carboxamide pocket. 2 residues coordinate Mg(2+): Q297 and E310.

The protein belongs to the phosphohexose mutase family. Mg(2+) serves as cofactor. The cofactor is Mn(2+).

It catalyses the reaction 5-amino-1-(5-phospho-beta-D-ribosyl)imidazole-4-carboxamide + formate + ATP = 5-formamido-1-(5-phospho-D-ribosyl)imidazole-4-carboxamide + ADP + phosphate. Its pathway is purine metabolism; IMP biosynthesis via de novo pathway; 5-formamido-1-(5-phospho-D-ribosyl)imidazole-4-carboxamide from 5-amino-1-(5-phospho-D-ribosyl)imidazole-4-carboxamide (formate route): step 1/1. Its function is as follows. Catalyzes the ATP- and formate-dependent formylation of 5-aminoimidazole-4-carboxamide-1-beta-d-ribofuranosyl 5'-monophosphate (AICAR) to 5-formaminoimidazole-4-carboxamide-1-beta-d-ribofuranosyl 5'-monophosphate (FAICAR) in the absence of folates. In Methanococcus aeolicus (strain ATCC BAA-1280 / DSM 17508 / OCM 812 / Nankai-3), this protein is 5-formaminoimidazole-4-carboxamide-1-(beta)-D-ribofuranosyl 5'-monophosphate synthetase.